The following is a 370-amino-acid chain: Platelet-derived growth factor D (370 aa).

The N-terminal stretch at 1-18 (MHRLIFVCTLVCANFCSC) is a signal peptide. The 119-residue stretch at 52-170 (RDETIQVRGN…PGFKIYYSLL (119 aa)) folds into the CUB domain. Residues Cys-109 and Cys-131 are joined by a disulfide bond. A glycan (N-linked (GlcNAc...) asparagine) is linked at Asn-276. 2 disulfides stabilise this stretch: Cys-302/Cys-360 and Cys-306/Cys-362.

Belongs to the PDGF/VEGF growth factor family. In terms of assembly, homodimer; disulfide-linked. Interacts with PDGFRB homodimers, and with heterodimers formed by PDGFRA and PDGFRB. Post-translationally, activated by proteolytic cleavage. Proteolytic removal of the N-terminal CUB domain releasing the core domain is necessary for unmasking the receptor-binding epitopes of the core domain. Cleavage after Arg-247 or Arg-249 by urokinase plasminogen activator gives rise to the active form.

It localises to the secreted. Its function is as follows. Growth factor that plays an essential role in the regulation of embryonic development, cell proliferation, cell migration, survival and chemotaxis. Potent mitogen for cells of mesenchymal origin. Plays an important role in wound healing. Induces macrophage recruitment, increased interstitial pressure, and blood vessel maturation during angiogenesis. Can initiate events that lead to a mesangial proliferative glomerulonephritis, including influx of monocytes and macrophages and production of extracellular matrix. In Pongo abelii (Sumatran orangutan), this protein is Platelet-derived growth factor D (PDGFD).